Here is a 190-residue protein sequence, read N- to C-terminus: GTP cyclohydrolase 1 (190 aa).

Zn(2+) is bound by residues Cys-80, His-83, and Cys-151.

It belongs to the GTP cyclohydrolase I family. As to quaternary structure, toroid-shaped homodecamer, composed of two pentamers of five dimers.

The catalysed reaction is GTP + H2O = 7,8-dihydroneopterin 3'-triphosphate + formate + H(+). It functions in the pathway cofactor biosynthesis; 7,8-dihydroneopterin triphosphate biosynthesis; 7,8-dihydroneopterin triphosphate from GTP: step 1/1. The polypeptide is GTP cyclohydrolase 1 (Rickettsia typhi (strain ATCC VR-144 / Wilmington)).